The sequence spans 681 residues: DNA-directed RNA polymerase subunit beta' (681 aa).

Zn(2+) contacts are provided by cysteine 69, cysteine 71, cysteine 87, and cysteine 90. 3 residues coordinate Mg(2+): aspartate 490, aspartate 492, and aspartate 494.

The protein belongs to the RNA polymerase beta' chain family. RpoC1 subfamily. In terms of assembly, in plastids the minimal PEP RNA polymerase catalytic core is composed of four subunits: alpha, beta, beta', and beta''. When a (nuclear-encoded) sigma factor is associated with the core the holoenzyme is formed, which can initiate transcription. It depends on Mg(2+) as a cofactor. Requires Zn(2+) as cofactor.

The protein resides in the plastid. The protein localises to the chloroplast. The catalysed reaction is RNA(n) + a ribonucleoside 5'-triphosphate = RNA(n+1) + diphosphate. Functionally, DNA-dependent RNA polymerase catalyzes the transcription of DNA into RNA using the four ribonucleoside triphosphates as substrates. This is DNA-directed RNA polymerase subunit beta' from Liriodendron tulipifera (Tuliptree).